The sequence spans 676 residues: DNA ligase (676 aa).

Residues 39–43 (DYVYD), 88–91 (SLND), and glutamate 118 contribute to the NAD(+) site. Residue lysine 120 is the N6-AMP-lysine intermediate of the active site. 4 residues coordinate NAD(+): arginine 141, glutamate 175, lysine 291, and lysine 315. The Zn(2+) site is built by cysteine 409, cysteine 412, cysteine 427, and cysteine 432. Positions 595–676 (EVESPFKDKT…MVDALDASHF (82 aa)) constitute a BRCT domain.

This sequence belongs to the NAD-dependent DNA ligase family. LigA subfamily. Mg(2+) is required as a cofactor. Requires Mn(2+) as cofactor.

It catalyses the reaction NAD(+) + (deoxyribonucleotide)n-3'-hydroxyl + 5'-phospho-(deoxyribonucleotide)m = (deoxyribonucleotide)n+m + AMP + beta-nicotinamide D-nucleotide.. Functionally, DNA ligase that catalyzes the formation of phosphodiester linkages between 5'-phosphoryl and 3'-hydroxyl groups in double-stranded DNA using NAD as a coenzyme and as the energy source for the reaction. It is essential for DNA replication and repair of damaged DNA. In Enterococcus faecalis (strain ATCC 700802 / V583), this protein is DNA ligase.